A 420-amino-acid chain; its full sequence is MSAVGNEPLARQALAFVLAGGRGSRLLELTDRRAKPAVYFGGKSRIIDFALSNAVNSGIRRIAVATQYKAHSLIRHLQMGWNFFRPERNESFDILPASQRVSENMWYVGTADAIYQNIDIIESHNARFIVVLAGDHIYKMDYEVMLRQHVDSGADVTVGCLEMPRAESSGFGIMHIDENGWIQEFLEKPADPPPMPGKPDVSLASMGIYVFDAKFLFDQLKRDAEDPSSNHDFGKDIIPYIVKNGRAIAHQFSTSCVRSGDDPRAYWRDVGTVDAYWAANIDLTDVVPELDLFDRAWPIWSYSEITPPAKFVHDEESRRGQAVSSLVSGGCIISGASLRRSLLFTGVRINSYANVENAVIMPYVNVGRGARLKNVVIDRGVEIPEGLVIGEDPELDAKRFRTTEQGISLITQPMIDRLNT.

Alpha-D-glucose 1-phosphate-binding positions include Y107, G172, 187–188, and S205; that span reads EK.

This sequence belongs to the bacterial/plant glucose-1-phosphate adenylyltransferase family. As to quaternary structure, homotetramer.

The catalysed reaction is alpha-D-glucose 1-phosphate + ATP + H(+) = ADP-alpha-D-glucose + diphosphate. The protein operates within glycan biosynthesis; glycogen biosynthesis. Involved in the biosynthesis of ADP-glucose, a building block required for the elongation reactions to produce glycogen. Catalyzes the reaction between ATP and alpha-D-glucose 1-phosphate (G1P) to produce pyrophosphate and ADP-Glc. This is Glucose-1-phosphate adenylyltransferase from Bradyrhizobium diazoefficiens (strain JCM 10833 / BCRC 13528 / IAM 13628 / NBRC 14792 / USDA 110).